We begin with the raw amino-acid sequence, 328 residues long: Malate dehydrogenase (328 aa).

11-17 contacts NAD(+); the sequence is GAAGQIG. 2 residues coordinate substrate: Arg-92 and Arg-98. NAD(+) is bound by residues Asn-105, Gln-112, and 129-131; that span reads TGN. Substrate is bound by residues Asn-131 and Arg-162. The Proton acceptor role is filled by His-187.

Belongs to the LDH/MDH superfamily. MDH type 2 family.

It carries out the reaction (S)-malate + NAD(+) = oxaloacetate + NADH + H(+). Its function is as follows. Catalyzes the reversible oxidation of malate to oxaloacetate. The chain is Malate dehydrogenase from Paenarthrobacter aurescens (strain TC1).